Here is a 61-residue protein sequence, read N- to C-terminus: Large ribosomal subunit protein uL30 (61 aa).

The protein belongs to the universal ribosomal protein uL30 family. Part of the 50S ribosomal subunit.

The chain is Large ribosomal subunit protein uL30 from Caulobacter vibrioides (strain ATCC 19089 / CIP 103742 / CB 15) (Caulobacter crescentus).